The chain runs to 182 residues: ATP-dependent protease subunit HslV (182 aa).

Residue Thr7 is part of the active site. Residues Ala166, Cys169, and Thr172 each contribute to the Na(+) site.

The protein belongs to the peptidase T1B family. HslV subfamily. As to quaternary structure, a double ring-shaped homohexamer of HslV is capped on each side by a ring-shaped HslU homohexamer. The assembly of the HslU/HslV complex is dependent on binding of ATP.

Its subcellular location is the cytoplasm. The catalysed reaction is ATP-dependent cleavage of peptide bonds with broad specificity.. Its activity is regulated as follows. Allosterically activated by HslU binding. Its function is as follows. Protease subunit of a proteasome-like degradation complex believed to be a general protein degrading machinery. The polypeptide is ATP-dependent protease subunit HslV (Albidiferax ferrireducens (strain ATCC BAA-621 / DSM 15236 / T118) (Rhodoferax ferrireducens)).